A 325-amino-acid polypeptide reads, in one-letter code: Protein VP6-B (325 aa).

Disordered stretches follow at residues 23–123 (INLI…TIGA) and 176–229 (VAEQ…EEQA). 2 stretches are compositionally biased toward basic and acidic residues: residues 32–52 (ESGK…ESKD) and 61–79 (SQKK…DRRI). Positions 106-123 (KVGGGGGNADAGVGTIGA) are enriched in gly residues. Composition is skewed to basic and acidic residues over residues 176–201 (VAEQ…AAER) and 210–226 (PHGD…KTSE).

This sequence belongs to the orbivirus VP6 family.

The protein resides in the virion. Surrounds and interacts with the genomic dsRNA. Possesses ss- and dsRNA-binding capacity. Its hydrophilic nature and capability to bind ss- and dsRNA suggest that it interacts with BTV genomic RNA. In Bluetongue virus 10 (isolate USA) (BTV 10), this protein is Protein VP6-B (Segment-9).